Reading from the N-terminus, the 203-residue chain is Glycerol-3-phosphate acyltransferase (203 aa).

The next 4 helical transmembrane spans lie at 3–23, 75–95, 113–133, and 156–176; these read LASALVLGAYLLGSVSTAILV, LGLEPVWIAAVALAAFLGHLF, VILGIQAWVGLAALATWLIVA, and LLTGERWYVAAGVLLAALIYW.

The protein belongs to the PlsY family. Probably interacts with PlsX.

Its subcellular location is the cell inner membrane. It carries out the reaction an acyl phosphate + sn-glycerol 3-phosphate = a 1-acyl-sn-glycero-3-phosphate + phosphate. The protein operates within lipid metabolism; phospholipid metabolism. Functionally, catalyzes the transfer of an acyl group from acyl-phosphate (acyl-PO(4)) to glycerol-3-phosphate (G3P) to form lysophosphatidic acid (LPA). This enzyme utilizes acyl-phosphate as fatty acyl donor, but not acyl-CoA or acyl-ACP. This is Glycerol-3-phosphate acyltransferase from Thioalkalivibrio sulfidiphilus (strain HL-EbGR7).